The chain runs to 311 residues: tRNA pseudouridine synthase B (311 aa).

Residue D52 is the Nucleophile of the active site.

It belongs to the pseudouridine synthase TruB family. Type 1 subfamily.

The catalysed reaction is uridine(55) in tRNA = pseudouridine(55) in tRNA. Its function is as follows. Responsible for synthesis of pseudouridine from uracil-55 in the psi GC loop of transfer RNAs. The protein is tRNA pseudouridine synthase B of Burkholderia mallei (strain ATCC 23344).